The sequence spans 703 residues: ABC transporter G family member 11 (703 aa).

Positions 50-293 constitute an ABC transporter domain; it reads LTWQDLTVMV…FAQAGFPCPA (244 aa). Residue 87-94 coordinates ATP; that stretch reads GPSGSGKS. Residues 382–594 form the ABC transmembrane type-2 domain; the sequence is LQTYTLTKRS…ALQGQYQNDL (213 aa). An N-linked (GlcNAc...) asparagine glycan is attached at Asn394. Helical transmembrane passes span 406–426, 436–456, 485–505, 513–533, 540–560, and 628–648; these read LLIY…VGTS, CASF…PSFV, TPFL…MVGL, LFFV…MMAI, FLMG…VSGF, and INLS…FIMI. 2 N-linked (GlcNAc...) asparagine glycosylation sites follow: Asn671 and Asn675. A Phosphoserine modification is found at Ser688.

It belongs to the ABC transporter superfamily. ABCG family. Eye pigment precursor importer (TC 3.A.1.204) subfamily. As to quaternary structure, homodimer. Forms heterodimers with ABCG9, ABCG12 and ABCG14 in epidermal cells. In terms of tissue distribution, expressed in seedlings, roots, stems, leaves, flowers, and siliques, mostly in epidermis, trichomes, vasculatures and developing tissues. Follows an uniparental maternal expression in the seed, thus being the product of a maternally expressed imprinted gene. Accumulates in the phloem. Transcripts seem to be transported from shoots to roots.

The protein localises to the cell membrane. Functionally, required for the cuticle, root suberin and pollen coat development by controlling cutin and maybe wax transport to the extracellular matrix. Involved in developmental plasticity and stress responses. Together with ABCG9 and ABCG14, required for vascular development by regulating lipid/sterol homeostasis. May be a transporter of lignin precursors during tracheary element differentiation. The chain is ABC transporter G family member 11 from Arabidopsis thaliana (Mouse-ear cress).